We begin with the raw amino-acid sequence, 348 residues long: CCAAT/enhancer-binding protein beta (348 aa).

Residues 1 to 24 (MQRLVVWDPVCLPLPPPPPAFKSM) are required for Lys-174 sumoylation. Arg-3 is subject to Asymmetric dimethylarginine; by CARM1. The tract at residues 24 to 135 (MEVANFYYEA…YGGKNCKKAA (112 aa)) is required for MYC transcriptional repression. Lys-43 carries the N6-acetyllysine; alternate modification. Lys-43 carries the N6-methylated lysine; alternate modification. Disordered regions lie at residues 44 to 65 (AAPAAPPADRPGPRPPTGELGS) and 79 to 112 (LEPLGAPQAPAPTTASDTFEAAPSAPAPVPASSG). The span at 47 to 59 (AAPPADRPGPRPP) shows a compositional bias: pro residues. Positions 116–124 (DFLSDLFSD) match the 9aaTAD motif. Residues Lys-129 and Lys-132 each carry the N6-acetyllysine; by KAT2A and KAT2B modification. The residue at position 133 (Lys-133) is an N6-acetyllysine; by KAT2A and KAT2B; alternate. Lys-133 is covalently cross-linked (Glycyl lysine isopeptide (Lys-Gly) (interchain with G-Cter in SUMO2); alternate). The segment at 158–178 (APLHPPPPPPPPPAELKAEPG) is disordered. The span at 160-171 (LHPPPPPPPPPA) shows a compositional bias: pro residues. A Glycyl lysine isopeptide (Lys-Gly) (interchain with G-Cter in SUMO2); alternate cross-link involves residue Lys-174. Lys-174 is covalently cross-linked (Glycyl lysine isopeptide (Lys-Gly) (interchain with G-Cter in SUMO); alternate). Glycyl lysine isopeptide (Lys-Gly) (interchain with G-Cter in SUMO2) cross-links involve residues Lys-185 and Lys-187. Over residues 219 to 259 (SGSSGSLSTSSSSSPPGTPSPADAKATPAAAACYAGAAPAP) the composition is skewed to low complexity. The segment at 219–277 (SGSSGSLSTSSSSSPPGTPSPADAKATPAAAACYAGAAPAPSQVKSKAKKTVDKHSDEY) is disordered. Thr-227 carries the post-translational modification Phosphothreonine; by GSK3-beta. Ser-228 and Ser-229 each carry an O-linked (GlcNAc) serine glycan. Position 232 is a phosphoserine; by GSK3-beta (Ser-232). Residue Thr-236 is modified to Phosphothreonine; by RPS6KA1, CDK2 and MAPK. Residues Lys-263 and Lys-265 each participate in a glycyl lysine isopeptide (Lys-Gly) (interchain with G-Cter in SUMO2) cross-link. The segment covering 268 to 277 (KTVDKHSDEY) has biased composition (basic and acidic residues). Thr-269 is subject to Phosphothreonine; by RPS6KA1 and PKC/PRKCA. The region spanning 274–337 (SDEYKIRRER…STLRNLFKTL (64 aa)) is the bZIP domain. The interval 278-298 (KIRRERNNIAVRKSRDKAKMR) is basic motif. Phosphoserine; by PKC/PRKCA is present on Ser-291. Residues 300–307 (LETQHKVL) are leucine-zipper. Position 328 is a phosphoserine; by CaMK2 (Ser-328). A Glycyl lysine isopeptide (Lys-Gly) (interchain with G-Cter in SUMO2) cross-link involves residue Lys-335.

Belongs to the bZIP family. C/EBP subfamily. As to quaternary structure, binds DNA as a homodimer and as a heterodimer. Interacts with ATF4. Binds DNA as a heterodimer with ATF4. Interacts with MYB; within the complex, MYB and CEBPB bind to different promoter regions. Can form stable heterodimers with CEBPA, CEBPD and CEBPG. Interacts with SIX1. Interacts with TRIM28 and PTGES2. Interacts with PRDM16. Interacts with CCDC85B. Forms a complex with THOC5. Interacts with ZNF638; this interaction increases transcriptional activation. Interacts with CIDEA and CIDEC; these interactions increase transcriptional activation of a subset of CEBPB downstream target genes. Interacts with DDIT3/CHOP. Interacts with EP300; recruits EP300 to chromatin. Interacts with RORA; the interaction disrupts interaction with EP300. Interacts (not methylated) with MED23, MED26, SMARCA2, SMARCB1 and SMARCC1. Interacts with KAT2A and KAT2B. Interacts with ATF5; EP300 is required for ATF5 and CEBPB interaction and DNA binding. Interacts with NFE2L1; the heterodimer represses expression of DSPP during odontoblast differentiation. In terms of processing, methylated. Methylation at Arg-3 by CARM1 and at Lys-43 by EHMT2 inhibit transactivation activity. Methylation is probably inhibited by phosphorylation at Thr-236. Post-translationally, sumoylated by polymeric chains of SUMO2 or SUMO3. Sumoylation at Lys-174 is required for inhibition of T-cells proliferation. In adipocytes, sumoylation at Lys-174 by PIAS1 leads to ubiquitination and subsequent proteasomal degradation. Desumoylated by SENP2, which abolishes ubiquitination and stabilizes protein levels. Ubiquitinated, leading to proteasomal degradation. In terms of processing, phosphorylated at Thr-236 by MAPK and CDK2, serves to prime phosphorylation at Thr-227 and Ser-232 by GSK3B and acquire DNA-binding as well as transactivation activities, required to induce adipogenesis. MAPK and CDK2 act sequentially to maintain Thr-236 in the primed phosphorylated state during mitotical cloning expansion and thereby progression of terminal differentiation. Phosphorylation at Thr-269 enhances transactivation activity. Phosphorylation at Ser-328 in response to calcium increases transactivation activity. Phosphorylated at Thr-236 by RPS6KA1. Post-translationally, O-glycosylated, glycosylation at Ser-228 and Ser-229 prevents phosphorylation on Thr-236, Ser-232 and Thr-227 and DNA binding activity which delays the adipocyte differentiation program. Acetylated. Acetylation at Lys-43 is an important and dynamic regulatory event that contributes to its ability to transactivate target genes, including those associated with adipogenesis and adipocyte function. Deacetylation by HDAC1 represses its transactivation activity. Acetylated by KAT2A and KAT2B within a cluster of lysine residues between amino acids 129-133, this acetylation is strongly induced by glucocorticoid treatment and enhances transactivation activity.

The protein resides in the nucleus. Its subcellular location is the cytoplasm. Functionally, important transcription factor regulating the expression of genes involved in immune and inflammatory responses. Also plays a significant role in adipogenesis, as well as in the gluconeogenic pathway, liver regeneration, and hematopoiesis. The consensus recognition site is 5'-T[TG]NNGNAA[TG]-3'. Its functional capacity is governed by protein interactions and post-translational protein modifications. During early embryogenesis, plays essential and redundant roles with CEBPA. Has a promitotic effect on many cell types such as hepatocytes and adipocytes but has an antiproliferative effect on T-cells by repressing MYC expression, facilitating differentiation along the T-helper 2 lineage. Binds to regulatory regions of several acute-phase and cytokines genes and plays a role in the regulation of acute-phase reaction and inflammation. Also plays a role in intracellular bacteria killing. During adipogenesis, is rapidly expressed and, after activation by phosphorylation, induces CEBPA and PPARG, which turn on the series of adipocyte genes that give rise to the adipocyte phenotype. The delayed transactivation of the CEBPA and PPARG genes by CEBPB appears necessary to allow mitotic clonal expansion and thereby progression of terminal differentiation. Essential for female reproduction because of a critical role in ovarian follicle development. Restricts osteoclastogenesis: together with NFE2L1; represses expression of DSPP during odontoblast differentiation. This is CCAAT/enhancer-binding protein beta (CEBPB) from Bos taurus (Bovine).